A 191-amino-acid chain; its full sequence is MKALSPIAVLISALLLQGCVAAAVVGTAAVGTKAATDPRSVGTQVDDGTLEVRVNSALSKDEQIKKEARINVTAYQGKVLLVGQSPNAELSARAKQIAMGVDGANEVYNEIRQGQPIGLGEASNDTWITTKVRSQLLTSDLVKSSNVKVTTENGEVFLMGLVTEREAKAAADIASRVSGVKRVTTAFTFIK.

The signal sequence occupies residues 1-18; that stretch reads MKALSPIAVLISALLLQG. Residue Cys19 is the site of N-palmitoyl cysteine attachment. Residue Cys19 is the site of S-diacylglycerol cysteine attachment. 2 consecutive BON domains span residues 46-115 and 124-191; these read DDGT…RQGQ and NDTW…TFIK.

The protein belongs to the lipoprotein DolP family.

It is found in the cell outer membrane. Plays an important role in maintaining outer membrane integrity. This Escherichia coli O157:H7 protein is Outer membrane lipoprotein DolP.